Reading from the N-terminus, the 125-residue chain is UPF0325 protein Ping_0715 (125 aa).

This sequence belongs to the UPF0325 family.

The protein is UPF0325 protein Ping_0715 of Psychromonas ingrahamii (strain DSM 17664 / CCUG 51855 / 37).